We begin with the raw amino-acid sequence, 335 residues long: Holliday junction branch migration complex subunit RuvB (335 aa).

The segment at Met-1–Tyr-183 is large ATPase domain (RuvB-L). ATP is bound by residues Leu-22, Arg-23, Gly-64, Lys-67, Thr-68, Thr-69, Glu-130–Tyr-132, Arg-173, Tyr-183, and Arg-220. Thr-68 contacts Mg(2+). A small ATPAse domain (RuvB-S) region spans residues Thr-184–Gln-254. Residues Pro-257–Val-335 form a head domain (RuvB-H) region. Positions 293, 312, and 317 each coordinate DNA.

Belongs to the RuvB family. In terms of assembly, homohexamer. Forms an RuvA(8)-RuvB(12)-Holliday junction (HJ) complex. HJ DNA is sandwiched between 2 RuvA tetramers; dsDNA enters through RuvA and exits via RuvB. An RuvB hexamer assembles on each DNA strand where it exits the tetramer. Each RuvB hexamer is contacted by two RuvA subunits (via domain III) on 2 adjacent RuvB subunits; this complex drives branch migration. In the full resolvosome a probable DNA-RuvA(4)-RuvB(12)-RuvC(2) complex forms which resolves the HJ.

It is found in the cytoplasm. It catalyses the reaction ATP + H2O = ADP + phosphate + H(+). Its function is as follows. The RuvA-RuvB-RuvC complex processes Holliday junction (HJ) DNA during genetic recombination and DNA repair, while the RuvA-RuvB complex plays an important role in the rescue of blocked DNA replication forks via replication fork reversal (RFR). RuvA specifically binds to HJ cruciform DNA, conferring on it an open structure. The RuvB hexamer acts as an ATP-dependent pump, pulling dsDNA into and through the RuvAB complex. RuvB forms 2 homohexamers on either side of HJ DNA bound by 1 or 2 RuvA tetramers; 4 subunits per hexamer contact DNA at a time. Coordinated motions by a converter formed by DNA-disengaged RuvB subunits stimulates ATP hydrolysis and nucleotide exchange. Immobilization of the converter enables RuvB to convert the ATP-contained energy into a lever motion, pulling 2 nucleotides of DNA out of the RuvA tetramer per ATP hydrolyzed, thus driving DNA branch migration. The RuvB motors rotate together with the DNA substrate, which together with the progressing nucleotide cycle form the mechanistic basis for DNA recombination by continuous HJ branch migration. Branch migration allows RuvC to scan DNA until it finds its consensus sequence, where it cleaves and resolves cruciform DNA. The protein is Holliday junction branch migration complex subunit RuvB of Listeria welshimeri serovar 6b (strain ATCC 35897 / DSM 20650 / CCUG 15529 / CIP 8149 / NCTC 11857 / SLCC 5334 / V8).